We begin with the raw amino-acid sequence, 746 residues long: Ring assembly protein 3 (746 aa).

It localises to the cytoplasm. Essential for actinomyosin ring assembly during cytokinesis. Has a role, in conjunction with F-actin, in assembling myosin II-containing proteins, such as myo2, at the division site. The polypeptide is Ring assembly protein 3 (rng3) (Schizosaccharomyces pombe (strain 972 / ATCC 24843) (Fission yeast)).